Consider the following 245-residue polypeptide: 1-(5-phosphoribosyl)-5-[(5-phosphoribosylamino)methylideneamino] imidazole-4-carboxamide isomerase (245 aa).

Catalysis depends on aspartate 7, which acts as the Proton acceptor. The Proton donor role is filled by aspartate 129.

This sequence belongs to the HisA/HisF family.

It is found in the cytoplasm. The catalysed reaction is 1-(5-phospho-beta-D-ribosyl)-5-[(5-phospho-beta-D-ribosylamino)methylideneamino]imidazole-4-carboxamide = 5-[(5-phospho-1-deoxy-D-ribulos-1-ylimino)methylamino]-1-(5-phospho-beta-D-ribosyl)imidazole-4-carboxamide. The protein operates within amino-acid biosynthesis; L-histidine biosynthesis; L-histidine from 5-phospho-alpha-D-ribose 1-diphosphate: step 4/9. This chain is 1-(5-phosphoribosyl)-5-[(5-phosphoribosylamino)methylideneamino] imidazole-4-carboxamide isomerase, found in Klebsiella pneumoniae subsp. pneumoniae (strain ATCC 700721 / MGH 78578).